A 309-amino-acid polypeptide reads, in one-letter code: Large ribosomal subunit protein mL45 (309 aa).

This sequence belongs to the mitochondrion-specific ribosomal protein mL45 family. In terms of assembly, component of the mitochondrial ribosome large subunit (39S) which comprises a 16S rRNA and about 50 distinct proteins.

It is found in the mitochondrion. In terms of biological role, component of the mitochondrial large ribosomal subunit (mt-LSU). Within the mitochondrial ribosomes, required to direct the nascent polypeptide toward the tunnel exit and position the exit at a distance from the membrane surface. The sequence is that of Large ribosomal subunit protein mL45 (mrpl45) from Xenopus laevis (African clawed frog).